The sequence spans 136 residues: Glycine-rich RNA-binding protein 4, mitochondrial (136 aa).

A mitochondrion-targeting transit peptide spans 1-33; that stretch reads MAFCNKLSGILRQGVSQSSNGPVTSMLGSLRYM. Residues 35 to 113 form the RRM domain; that stretch reads SKLFVGGLSW…RQIRVNLATE (79 aa). Ser-43 is subject to Phosphoserine. Residues 113–136 are disordered; it reads ERSSAPRSSFGGGGGYGGGGGGGY. Residues 122-136 are compositionally biased toward gly residues; that stretch reads FGGGGGYGGGGGGGY. Residues 123 to 135 form a glycine-rich (GR) required for cell-to-cell movement region; it reads GGGGGYGGGGGGG.

The protein belongs to the GR-RBP family. In terms of assembly, binds to small phloem-mobile single-stranded RNAs (ss-sRNA, e.g. small interfering RNA (siRNA) and microRNA (miRNA)) in the phloeme exudate, including viral-derived sRNA (vsiRNA). As to expression, abundantly expressed in young plants, root tips, and flowers, but weakly in mature leaves and stems, implying highly expression in actively proliferating organs.

The protein localises to the mitochondrion. The protein resides in the secreted. Functionally, possibly has a role in RNA transcription or processing during stress. Binds sequence non-specifically to RNAs and DNAs. Mediates cell-to-cell trafficking of RNA interference (RNAi) signals (small RNAs (sRNA), e.g. small interfering RNA (siRNA) and microRNA (miRNA)) which regulate growth and development, as well as responses to environmental inputs, including pathogen attack; can compromise zucchini yellow mosaic virus (ZYMV) and tobacco rattle virus (TRV) infections at the early stage. In Arabidopsis thaliana (Mouse-ear cress), this protein is Glycine-rich RNA-binding protein 4, mitochondrial.